The sequence spans 439 residues: Proline--tRNA ligase (439 aa).

Belongs to the class-II aminoacyl-tRNA synthetase family. ProS type 2 subfamily. In terms of assembly, homodimer.

The protein localises to the cytoplasm. The enzyme catalyses tRNA(Pro) + L-proline + ATP = L-prolyl-tRNA(Pro) + AMP + diphosphate. In terms of biological role, catalyzes the attachment of proline to tRNA(Pro) in a two-step reaction: proline is first activated by ATP to form Pro-AMP and then transferred to the acceptor end of tRNA(Pro). This Bradyrhizobium diazoefficiens (strain JCM 10833 / BCRC 13528 / IAM 13628 / NBRC 14792 / USDA 110) protein is Proline--tRNA ligase.